The sequence spans 375 residues: Aminomethyltransferase (375 aa).

This sequence belongs to the GcvT family. The glycine cleavage system is composed of four proteins: P, T, L and H.

It catalyses the reaction N(6)-[(R)-S(8)-aminomethyldihydrolipoyl]-L-lysyl-[protein] + (6S)-5,6,7,8-tetrahydrofolate = N(6)-[(R)-dihydrolipoyl]-L-lysyl-[protein] + (6R)-5,10-methylene-5,6,7,8-tetrahydrofolate + NH4(+). The glycine cleavage system catalyzes the degradation of glycine. This Ralstonia pickettii (strain 12J) protein is Aminomethyltransferase.